The sequence spans 247 residues: tRNA (guanine-N(1)-)-methyltransferase (247 aa).

S-adenosyl-L-methionine is bound by residues G113 and 133–138 (IGDFVM).

Belongs to the RNA methyltransferase TrmD family. In terms of assembly, homodimer.

The protein localises to the cytoplasm. The enzyme catalyses guanosine(37) in tRNA + S-adenosyl-L-methionine = N(1)-methylguanosine(37) in tRNA + S-adenosyl-L-homocysteine + H(+). Specifically methylates guanosine-37 in various tRNAs. This is tRNA (guanine-N(1)-)-methyltransferase from Vibrio campbellii (strain ATCC BAA-1116).